Here is a 364-residue protein sequence, read N- to C-terminus: Gap junction delta-4 protein (364 aa).

The Cytoplasmic portion of the chain corresponds to 1–19 (MEKLNLLGFLIITLNCNVT). Residues 20-40 (IMGMIWLIVEVLLRMLVVVLA) form a helical membrane-spanning segment. Topologically, residues 41 to 76 (GSPIYEDEQERFICNTLQPGCANVCYDLFSPVSPLR) are extracellular. The chain crosses the membrane as a helical span at residues 77–97 (FWLVQSLALLLPSVVFGTYTL). Residues 98 to 128 (HRGAKLAAVGGACRPQVPDLSTAYLVHLLLR) are Cytoplasmic-facing. A helical membrane pass occupies residues 129–149 (MLLEAGLAFLHYFLFGFSVPA). Over 150–173 (RVSCSHVPCSGAVDCYVSRPTEKS) the chain is Extracellular. The chain crosses the membrane as a helical span at residues 174–194 (LLILFFWAVSALSFLLSLADL). The Cytoplasmic segment spans residues 195-364 (LWILPRRKTL…HLRTKKSEWV (170 aa)). Positions 331-340 (HLARHSSASK) are enriched in polar residues. The tract at residues 331–364 (HLARHSSASKPQAPCRLTTSGSAPHLRTKKSEWV) is disordered.

Belongs to the connexin family. Delta-type subfamily. In terms of assembly, a connexon is composed of a hexamer of connexins.

It is found in the cell membrane. Its subcellular location is the cell junction. It localises to the gap junction. In terms of biological role, one gap junction consists of a cluster of closely packed pairs of transmembrane channels, the connexons, through which materials of low MW diffuse from one cell to a neighboring cell. The polypeptide is Gap junction delta-4 protein (Gjd4) (Mus musculus (Mouse)).